We begin with the raw amino-acid sequence, 291 residues long: MDFKWLHTFVTAAKYENFRKTAETLFLSQPTVTVHIKQLEKEISCKLFERKGRQIQLTDEGRAYLPYALRLLDDYENSMAELHRVRQGYSQTLQLAVSPLIADTVLPSVMKRYTAMNTETEMAVTIFESAEIASLIKAGEADIGLSCLKVQSSSLSCHCLYKDPVVLVAPPDKRFIEDNEIDAKEVLEQYLLLTHNHPDYWDDLLRQVRMTFPFVRTMKVTQTHITKRFIKEGLGVSFLPLSTVKRELAEKQMIRIPYQSVQLPYAGAYAIALYENKKEKKFLDFLSHFHF.

One can recognise an HTH lysR-type domain in the interval 1–58; the sequence is MDFKWLHTFVTAAKYENFRKTAETLFLSQPTVTVHIKQLEKEISCKLFERKGRQIQLT. Positions 18–37 form a DNA-binding region, H-T-H motif; sequence FRKTAETLFLSQPTVTVHIK.

Belongs to the LysR transcriptional regulatory family.

The protein resides in the cytoplasm. Its function is as follows. Negative regulatory protein for the citA gene for citrate synthase I. The polypeptide is HTH-type transcriptional regulator CitR (citR) (Bacillus subtilis (strain 168)).